A 444-amino-acid polypeptide reads, in one-letter code: MTDSTHRTTAIILAAGLGTRMKSRLPKALHRLGNQPMINHLITTARQVFDDVVVVTGPDMPELEKAVRPFKTVTQVERLGTAHAANTARDLFGTGDVAILYADNPLITAETMRRLLAARREGASLALLGMRPAEPGRYGRIVEDHGRVVKIVEFKDATEDERRITLCNAGVMCAGVDDFRTWLANVGNDNAQGEYYLTDVVEMAAKAGPVVCVEAPEAELAGVNSRSELARAEATLQTRLRNAAMDAGVTLVAPETVFFSTDTVIEADVTIEPNVFFGPGVKVRSGALIRAFSHLEGCEVGENAMIGPYARLRPGTLCAAQTHVGNFVELKNVELGEGAKANHLTYLGDASIGSGTNVGAGTITCNYDGVFKHRTTIGERVFVGSDSILVAPVTVGDDALIAAGSVITSDVPPGDLALGRARQTLKSGQGLQIKQSLKARKEQG.

The pyrophosphorylase stretch occupies residues 1–226 (MTDSTHRTTA…EAELAGVNSR (226 aa)). Residues 13–16 (LAAG), Lys27, Gln75, and 80–81 (GT) each bind UDP-N-acetyl-alpha-D-glucosamine. A Mg(2+)-binding site is contributed by Asp103. Positions 139, 153, 168, and 224 each coordinate UDP-N-acetyl-alpha-D-glucosamine. Asn224 contributes to the Mg(2+) binding site. Positions 227–247 (SELARAEATLQTRLRNAAMDA) are linker. Residues 248–444 (GVTLVAPETV…QSLKARKEQG (197 aa)) are N-acetyltransferase. UDP-N-acetyl-alpha-D-glucosamine contacts are provided by Arg313 and Lys331. His343 (proton acceptor) is an active-site residue. Positions 346 and 357 each coordinate UDP-N-acetyl-alpha-D-glucosamine. Acetyl-CoA is bound by residues Ala360, 366–367 (NY), Ser385, Ala403, and Arg420.

In the N-terminal section; belongs to the N-acetylglucosamine-1-phosphate uridyltransferase family. This sequence in the C-terminal section; belongs to the transferase hexapeptide repeat family. As to quaternary structure, homotrimer. Requires Mg(2+) as cofactor.

The protein resides in the cytoplasm. It carries out the reaction alpha-D-glucosamine 1-phosphate + acetyl-CoA = N-acetyl-alpha-D-glucosamine 1-phosphate + CoA + H(+). The enzyme catalyses N-acetyl-alpha-D-glucosamine 1-phosphate + UTP + H(+) = UDP-N-acetyl-alpha-D-glucosamine + diphosphate. The protein operates within nucleotide-sugar biosynthesis; UDP-N-acetyl-alpha-D-glucosamine biosynthesis; N-acetyl-alpha-D-glucosamine 1-phosphate from alpha-D-glucosamine 6-phosphate (route II): step 2/2. It functions in the pathway nucleotide-sugar biosynthesis; UDP-N-acetyl-alpha-D-glucosamine biosynthesis; UDP-N-acetyl-alpha-D-glucosamine from N-acetyl-alpha-D-glucosamine 1-phosphate: step 1/1. It participates in bacterial outer membrane biogenesis; LPS lipid A biosynthesis. In terms of biological role, catalyzes the last two sequential reactions in the de novo biosynthetic pathway for UDP-N-acetylglucosamine (UDP-GlcNAc). The C-terminal domain catalyzes the transfer of acetyl group from acetyl coenzyme A to glucosamine-1-phosphate (GlcN-1-P) to produce N-acetylglucosamine-1-phosphate (GlcNAc-1-P), which is converted into UDP-GlcNAc by the transfer of uridine 5-monophosphate (from uridine 5-triphosphate), a reaction catalyzed by the N-terminal domain. The sequence is that of Bifunctional protein GlmU from Gluconobacter oxydans (strain 621H) (Gluconobacter suboxydans).